The chain runs to 504 residues: Cobyric acid synthase (504 aa).

A GATase cobBQ-type domain is found at 254 to 442 (AIDVAVIRYP…MHDLFHNDMF (189 aa)). Cys336 (nucleophile) is an active-site residue. The active site involves His434.

The protein belongs to the CobB/CobQ family. CobQ subfamily.

It functions in the pathway cofactor biosynthesis; adenosylcobalamin biosynthesis. Its function is as follows. Catalyzes amidations at positions B, D, E, and G on adenosylcobyrinic A,C-diamide. NH(2) groups are provided by glutamine, and one molecule of ATP is hydrogenolyzed for each amidation. This is Cobyric acid synthase from Anoxybacillus flavithermus (strain DSM 21510 / WK1).